A 136-amino-acid polypeptide reads, in one-letter code: Phosphoribosyl-AMP cyclohydrolase (136 aa).

Residue aspartate 89 coordinates Mg(2+). Cysteine 90 is a Zn(2+) binding site. Aspartate 91 and aspartate 93 together coordinate Mg(2+). Zn(2+) is bound by residues cysteine 106 and cysteine 113.

This sequence belongs to the PRA-CH family. As to quaternary structure, homodimer. Mg(2+) is required as a cofactor. It depends on Zn(2+) as a cofactor.

Its subcellular location is the cytoplasm. It catalyses the reaction 1-(5-phospho-beta-D-ribosyl)-5'-AMP + H2O = 1-(5-phospho-beta-D-ribosyl)-5-[(5-phospho-beta-D-ribosylamino)methylideneamino]imidazole-4-carboxamide. Its pathway is amino-acid biosynthesis; L-histidine biosynthesis; L-histidine from 5-phospho-alpha-D-ribose 1-diphosphate: step 3/9. Catalyzes the hydrolysis of the adenine ring of phosphoribosyl-AMP. This chain is Phosphoribosyl-AMP cyclohydrolase, found in Bifidobacterium longum subsp. infantis (strain ATCC 15697 / DSM 20088 / JCM 1222 / NCTC 11817 / S12).